A 292-amino-acid chain; its full sequence is Imipenem-hydrolyzing beta-lactamase (292 aa).

The first 27 residues, 1–27, serve as a signal peptide directing secretion; the sequence is MSLNVKQSRIAILFSSCLISISFFSQA. Cys70 and Cys240 are disulfide-bonded. Ser71 (acyl-ester intermediate) is an active-site residue. 236–238 lines the substrate pocket; sequence KTG.

This sequence belongs to the class-A beta-lactamase family.

It catalyses the reaction a beta-lactam + H2O = a substituted beta-amino acid. Its function is as follows. Hydrolyzes carbapenems such as imipenem, which are extended-spectrum beta-lactam antibiotics. The protein is Imipenem-hydrolyzing beta-lactamase (nmcA) of Enterobacter cloacae.